The primary structure comprises 910 residues: MTNERKEVSEAPVNFGANLGLMLDLYDDFLQDPSSVPEDLQVLFSTIKRVMRLIDNIRQYGHLKADIYPVNPPKRKHVPKLEIEDFDLDQQTLEGISAGIVSDHFADIYDNAYEAILRMEKRYKGPIAFEYTHINNNTERGWLKRRIETPYKVTLNNNEKRALFKQLAYVEGFEKYLHKNFVGAKRFSIEGVDALVPMLQRTITIAAKEGIKNIQIGMAHRGRLNVLTHVLEKPYEMMISEFMHTDPMKFLPEDGSLQLTAGWTGDVKYHLGGIKTTDSYGTMQRIALANNPSHLEIVAPVVEGRTRAAQDDTQRAGAPTTDHHKAMPIIIHGDAAYPGQGINFETMNLGNLKGYSTGGSLHIITNNRIGFTTEPIDARSTTYSTDVAKGYDVPIFHVNADDVEATIEAIDIAMEFRKEFHKDVVIDLVGYRRFGHNEMDEPSITNPVPYQNIRKHDSVEYVFGKKLVNEGVISEDEMHSFIEQVQKELRQAHDKINKADKMDNPDMEKPAELALPLQADEQSFTFDHLKEINDALLTYPDGFNILKKLNKVLEKRHEPFNKEDGLVDWAQAEQLAFATILQDGTPIRLTGQDSERGTFSHRHAVLHDEQTGETYTPLHHVPDQKATFDIHNSPLSEAAVVGFEYGYNVENKKSFNIWEAQYGDFANMSQMIFDNFLFSSRSKWGERSGLTLFLPHAYEGQGPEHSSARLERFLQLAAENNCTVVNLSSSSNYFHLLRAQAASLDSEQMRPLVVMSPKSLLRNKTVAKPIDEFTSGGFEPILTESYQADKVTKVILATGKMFIDLKEALAKNPDESVLLVAIERLYPFPEEEIEALLAQLPKLEEVSWVQEEPKNQGAWLYVYPYVKVLVADKYDLSYHGRIQRAAPAEGDGEIHKLVQNKIIENALKNN.

Belongs to the alpha-ketoglutarate dehydrogenase family. As to quaternary structure, homodimer. Part of the 2-oxoglutarate dehydrogenase (OGDH) complex composed of E1 (2-oxoglutarate dehydrogenase), E2 (dihydrolipoamide succinyltransferase) and E3 (dihydrolipoamide dehydrogenase); the complex contains multiple copies of the three enzymatic components (E1, E2 and E3). Requires thiamine diphosphate as cofactor.

It carries out the reaction N(6)-[(R)-lipoyl]-L-lysyl-[protein] + 2-oxoglutarate + H(+) = N(6)-[(R)-S(8)-succinyldihydrolipoyl]-L-lysyl-[protein] + CO2. Its function is as follows. E1 component of the 2-oxoglutarate dehydrogenase (OGDH) complex which catalyzes the decarboxylation of 2-oxoglutarate, the first step in the conversion of 2-oxoglutarate to succinyl-CoA and CO(2). In Staphylococcus aureus (strain N315), this protein is 2-oxoglutarate dehydrogenase E1 component.